Here is a 380-residue protein sequence, read N- to C-terminus: MPVSDDSSSAFDLICAEIERQLRGGELLMDAAAASELLLTVRYQLDTQPRPLVIVHGPLFQAVKAARAQVYGRLIQLRHARCEVLDERWQLRPTGQRDVRALLIDVLNVLLAAITAAGVERAYACAERRAMAAAVVAKNYRDALGVELQCNSVCRAAAEAIHALAHRTGATEDADCLPPVDVIHADVTRRMHGEVATDVVAAGELVIAARHLLDPMPRGELSYGPLHEGGNAARKSVYRRLVQLWQARRAVTDGDVDLRDARTLLTDLDSILREMRTAATIQQSGTAGDGGGGRRQDSRRRNGPRRPARRGTSRGRRCAPRVAIGWHTPIGDPLAVEGVEEIGASLPGRESTPSDDGGSLHPSGRPRRVHRRRWCGLGLC.

2 disordered regions span residues A278–A323 and S345–R368. The segment covering R301–A319 has biased composition (basic residues).

This is an uncharacterized protein from Mycobacterium tuberculosis (strain CDC 1551 / Oshkosh).